The primary structure comprises 124 residues: Small ribosomal subunit protein bS6 (124 aa).

The segment at 99–124 is disordered; that stretch reads PLPAPRIVPGSEPEPVEQQEAAAVEA. The span at 114–124 shows a compositional bias: low complexity; that stretch reads VEQQEAAAVEA.

The protein belongs to the bacterial ribosomal protein bS6 family.

Binds together with bS18 to 16S ribosomal RNA. The protein is Small ribosomal subunit protein bS6 of Prochlorococcus marinus (strain MIT 9303).